The sequence spans 497 residues: Bifunctional protein GlmU (497 aa).

Residues 1–241 form a pyrophosphorylase region; sequence MSPETIGPAA…RWQVEGANDR (241 aa). UDP-N-acetyl-alpha-D-glucosamine contacts are provided by residues 14-17, Lys28, Gln81, 86-87, 112-114, Gly151, Glu166, Asn181, and Asn239; these read LAAG, GT, and YGD. Asp114 provides a ligand contact to Mg(2+). Asn239 serves as a coordination point for Mg(2+). The linker stretch occupies residues 242–262; sequence IQLSALAAEHNRRIIESWMRA. The N-acetyltransferase stretch occupies residues 263–497; the sequence is GVTVVDPATT…QATIEEGKQA (235 aa). UDP-N-acetyl-alpha-D-glucosamine-binding residues include Arg344 and Lys362. His374 functions as the Proton acceptor in the catalytic mechanism. The UDP-N-acetyl-alpha-D-glucosamine site is built by Tyr377 and Asn388. Acetyl-CoA contacts are provided by residues 397-398, Ser416, and Ala434; that span reads NY.

The protein in the N-terminal section; belongs to the N-acetylglucosamine-1-phosphate uridyltransferase family. This sequence in the C-terminal section; belongs to the transferase hexapeptide repeat family. In terms of assembly, homotrimer. Requires Mg(2+) as cofactor.

It localises to the cytoplasm. It catalyses the reaction alpha-D-glucosamine 1-phosphate + acetyl-CoA = N-acetyl-alpha-D-glucosamine 1-phosphate + CoA + H(+). The enzyme catalyses N-acetyl-alpha-D-glucosamine 1-phosphate + UTP + H(+) = UDP-N-acetyl-alpha-D-glucosamine + diphosphate. The protein operates within nucleotide-sugar biosynthesis; UDP-N-acetyl-alpha-D-glucosamine biosynthesis; N-acetyl-alpha-D-glucosamine 1-phosphate from alpha-D-glucosamine 6-phosphate (route II): step 2/2. Its pathway is nucleotide-sugar biosynthesis; UDP-N-acetyl-alpha-D-glucosamine biosynthesis; UDP-N-acetyl-alpha-D-glucosamine from N-acetyl-alpha-D-glucosamine 1-phosphate: step 1/1. It functions in the pathway bacterial outer membrane biogenesis; LPS lipid A biosynthesis. Functionally, catalyzes the last two sequential reactions in the de novo biosynthetic pathway for UDP-N-acetylglucosamine (UDP-GlcNAc). The C-terminal domain catalyzes the transfer of acetyl group from acetyl coenzyme A to glucosamine-1-phosphate (GlcN-1-P) to produce N-acetylglucosamine-1-phosphate (GlcNAc-1-P), which is converted into UDP-GlcNAc by the transfer of uridine 5-monophosphate (from uridine 5-triphosphate), a reaction catalyzed by the N-terminal domain. This is Bifunctional protein GlmU from Paenarthrobacter aurescens (strain TC1).